Here is a 231-residue protein sequence, read N- to C-terminus: Phosphatidylserine decarboxylase proenzyme (231 aa).

The active-site Schiff-base intermediate with substrate; via pyruvic acid is the Ser188. Ser188 bears the Pyruvic acid (Ser); by autocatalysis mark.

Belongs to the phosphatidylserine decarboxylase family. PSD-A subfamily. In terms of assembly, heterodimer of a large membrane-associated beta subunit and a small pyruvoyl-containing alpha subunit. Pyruvate is required as a cofactor. In terms of processing, is synthesized initially as an inactive proenzyme. Formation of the active enzyme involves a self-maturation process in which the active site pyruvoyl group is generated from an internal serine residue via an autocatalytic post-translational modification. Two non-identical subunits are generated from the proenzyme in this reaction, and the pyruvate is formed at the N-terminus of the alpha chain, which is derived from the carboxyl end of the proenzyme. The post-translation cleavage follows an unusual pathway, termed non-hydrolytic serinolysis, in which the side chain hydroxyl group of the serine supplies its oxygen atom to form the C-terminus of the beta chain, while the remainder of the serine residue undergoes an oxidative deamination to produce ammonia and the pyruvoyl prosthetic group on the alpha chain.

Its subcellular location is the cell membrane. It carries out the reaction a 1,2-diacyl-sn-glycero-3-phospho-L-serine + H(+) = a 1,2-diacyl-sn-glycero-3-phosphoethanolamine + CO2. It participates in phospholipid metabolism; phosphatidylethanolamine biosynthesis; phosphatidylethanolamine from CDP-diacylglycerol: step 2/2. In terms of biological role, catalyzes the formation of phosphatidylethanolamine (PtdEtn) from phosphatidylserine (PtdSer). The chain is Phosphatidylserine decarboxylase proenzyme from Rickettsia felis (strain ATCC VR-1525 / URRWXCal2) (Rickettsia azadi).